The chain runs to 362 residues: Chorismate synthase (362 aa).

NADP(+) is bound by residues R48 and R54. Residues 131–133, 243–244, G287, 302–306, and R328 each bind FMN; these read RSS, NA, and KPTSS.

It belongs to the chorismate synthase family. Homotetramer. FMNH2 serves as cofactor.

It carries out the reaction 5-O-(1-carboxyvinyl)-3-phosphoshikimate = chorismate + phosphate. It participates in metabolic intermediate biosynthesis; chorismate biosynthesis; chorismate from D-erythrose 4-phosphate and phosphoenolpyruvate: step 7/7. Catalyzes the anti-1,4-elimination of the C-3 phosphate and the C-6 proR hydrogen from 5-enolpyruvylshikimate-3-phosphate (EPSP) to yield chorismate, which is the branch point compound that serves as the starting substrate for the three terminal pathways of aromatic amino acid biosynthesis. This reaction introduces a second double bond into the aromatic ring system. The sequence is that of Chorismate synthase from Rhodopseudomonas palustris (strain ATCC BAA-98 / CGA009).